A 518-amino-acid chain; its full sequence is DNA nucleotidylexotransferase (518 aa).

A Nuclear localization signal motif is present at residues 11-17 (FGKKRQK). Residues 27-124 (IYEIKFHEFV…KPVDTKGKYQ (98 aa)) form the BRCT domain. The mediates interaction with DNTTIP2 stretch occupies residues 153-518 (SQYACQRRTT…EYIQPSERNA (366 aa)). An involved in DNA binding region spans residues 260 to 264 (VGLKT). A 2'-deoxyribonucleoside 5'-triphosphate is bound by residues 335-340 (GFRRGK) and 344-347 (HDVD). The Mg(2+) site is built by Asp345, Asp347, and Asp442. 457–458 (GW) lines the a 2'-deoxyribonucleoside 5'-triphosphate pocket.

It belongs to the DNA polymerase type-X family. In terms of assembly, interacts with PRP19 and DNTTIP1. Interacts with TRERF1. Forms a ternary complex with DNTTIP2 and core histone. Released from this complex by PCNA. It depends on Mg(2+) as a cofactor.

The protein resides in the nucleus. The catalysed reaction is DNA(n) + a 2'-deoxyribonucleoside 5'-triphosphate = DNA(n+1) + diphosphate. Its function is as follows. Template-independent DNA polymerase which catalyzes the random addition of deoxynucleoside 5'-triphosphate to the 3'-end of a DNA initiator. One of the in vivo functions of this enzyme is the addition of nucleotides at the junction (N region) of rearranged Ig heavy chain and T-cell receptor gene segments during the maturation of B- and T-cells. This Monodelphis domestica (Gray short-tailed opossum) protein is DNA nucleotidylexotransferase (DNTT).